A 445-amino-acid polypeptide reads, in one-letter code: Homogentisate 1,2-dioxygenase (445 aa).

Lys-98 bears the N6-acetyllysine mark. Fe cation is bound by residues His-335, Glu-341, and His-371. Lys-414 is subject to N6-succinyllysine.

Belongs to the homogentisate dioxygenase family. In terms of assembly, homohexamer arranged as a dimer of trimers. The cofactor is Fe cation. Highest expression in the prostate, small intestine, colon, kidney and liver.

The catalysed reaction is homogentisate + O2 = 4-maleylacetoacetate + H(+). The protein operates within amino-acid degradation; L-phenylalanine degradation; acetoacetate and fumarate from L-phenylalanine: step 4/6. Catalyzes the conversion of homogentisate to maleylacetoacetate. This is Homogentisate 1,2-dioxygenase (HGD) from Homo sapiens (Human).